Consider the following 230-residue polypeptide: Prolactin-3D1 (230 aa).

The signal sequence occupies residues 1–29 (MQLTLTLSRASGMQLFLLVSSLLLWEKVA). Cystine bridges form between cysteine 81–cysteine 200 and cysteine 217–cysteine 225. 2 N-linked (GlcNAc...) asparagine glycosylation sites follow: asparagine 109 and asparagine 158.

Belongs to the somatotropin/prolactin family.

It is found in the secreted. This chain is Prolactin-3D1 (Prl3d1), found in Rattus norvegicus (Rat).